We begin with the raw amino-acid sequence, 74 residues long: MAKKPTLDFETTLKELEEIVNRLETGDLPLEEALNEFETAVKLVQQGQERLQKAEQRIQILLQKNEHADLTDYP.

The protein belongs to the XseB family. As to quaternary structure, heterooligomer composed of large and small subunits.

It localises to the cytoplasm. The catalysed reaction is Exonucleolytic cleavage in either 5'- to 3'- or 3'- to 5'-direction to yield nucleoside 5'-phosphates.. Functionally, bidirectionally degrades single-stranded DNA into large acid-insoluble oligonucleotides, which are then degraded further into small acid-soluble oligonucleotides. This chain is Exodeoxyribonuclease 7 small subunit, found in Glaesserella parasuis serovar 5 (strain SH0165) (Haemophilus parasuis).